We begin with the raw amino-acid sequence, 991 residues long: Toll-like receptor 13 (991 aa).

An N-terminal signal peptide occupies residues 1-68 (MSGLYRILVQ…GFSLPPVAET (68 aa)). The Extracellular segment spans residues 69-783 (YGFNKCTQYE…DAMCNFDLGK (715 aa)). Residues Asn93, Asn109, and Asn125 are each glycosylated (N-linked (GlcNAc...) asparagine). 25 LRR repeats span residues 104-125 (YTTH…SFTN), 128-149 (ALVD…AFRG), 152-174 (NLTL…EGLS), 175-196 (SLKT…AFTP), 199-220 (KLKY…LEAV), 225-246 (CLER…PRSL), 248-268 (SLTH…SALS), 271-292 (NLTN…YLKT), 295-315 (QLKS…SAKH), 318-338 (NLRA…DMKT), 348-368 (KLET…KQLA), 372-394 (RLLF…EFNA), 397-418 (SLQK…TWSS), 421-442 (NLTS…AFSP), 445-466 (HLEF…AFSG), 469-490 (ALKE…SFTQ), 493-514 (NLEV…TFRP), 517-538 (KLQS…SFSG), 541-562 (NLRS…LFSG), 565-585 (KLLI…RTLQ), 594-617 (SLKQ…FFQG), 620-641 (SLQE…QFDP), 644-665 (NLTK…LNAS), 672-693 (RLKI…MFSS), and 696-716 (SLQV…SHLK). Asn152 and Asn167 each carry an N-linked (GlcNAc...) asparagine glycan. 7 N-linked (GlcNAc...) asparagine glycosylation sites follow: Asn209, Asn233, Asn263, Asn271, Asn274, Asn300, and Asn310. 4 N-linked (GlcNAc...) asparagine glycosylation sites follow: Asn357, Asn388, Asn413, and Asn421. Asn644 and Asn663 each carry an N-linked (GlcNAc...) asparagine glycan. Asn711 and Asn742 each carry an N-linked (GlcNAc...) asparagine glycan. The region spanning 729 to 779 (NKLQCTCDNLWFKNWSMNTEEVHIPFLRSYPCQQPGSQSLLIDFDDAMCNF) is the LRRCT domain. The chain crosses the membrane as a helical span at residues 784–804 (VYFLCSFSMVLSTMVFSWFST). At 805 to 991 (KMIASLWYGL…KENTHLIVVE (187 aa)) the chain is on the cytoplasmic side. One can recognise a TIR domain in the interval 832–975 (FLYDAFVSFS…LFWARIRNAL (144 aa)).

Belongs to the Toll-like receptor family. Binds MYD88 via their respective TIR domains. Interacts with UNC93B1.

It localises to the endosome membrane. Functionally, component of innate and adaptive immunity that recognizes and binds 23S rRNA from bacteria. TLRs (Toll-like receptors) control host immune response against pathogens through recognition of molecular patterns specific to microorganisms. Acts via MYD88 and TRAF6, leading to NF-kappa-B activation, cytokine secretion and the inflammatory response. Specifically binds the 5'-CGGAAAGACC-3' sequence on bacterial 23S rRNA, a sequence also bound by MLS group antibiotics (including erythromycin). May also recognize vesicular stomatitis virus; however, these data require additional evidences. In Mus musculus (Mouse), this protein is Toll-like receptor 13 (Tlr13).